Reading from the N-terminus, the 464-residue chain is Adenosylhomocysteinase (464 aa).

Substrate contacts are provided by T56, D131, and E190. Position 191 to 193 (191 to 193 (TTT)) interacts with NAD(+). Substrate-binding residues include K220 and D224. Residues N225, 254 to 259 (GFGDVG), E277, N312, 333 to 335 (IGH), and N378 each bind NAD(+).

Belongs to the adenosylhomocysteinase family. Requires NAD(+) as cofactor.

Its subcellular location is the cytoplasm. The catalysed reaction is S-adenosyl-L-homocysteine + H2O = L-homocysteine + adenosine. The protein operates within amino-acid biosynthesis; L-homocysteine biosynthesis; L-homocysteine from S-adenosyl-L-homocysteine: step 1/1. Its function is as follows. May play a key role in the regulation of the intracellular concentration of adenosylhomocysteine. This is Adenosylhomocysteinase from Zymomonas mobilis subsp. mobilis (strain ATCC 31821 / ZM4 / CP4).